We begin with the raw amino-acid sequence, 308 residues long: Palmitoyltransferase ZDHHC7 (308 aa).

At 1-50 (MQPSGHRLRDIEHHPLLTDNDNYDSASSSSSETDMADRVWFIRDGCGMVC) the chain is on the cytoplasmic side. Residues 51 to 71 (AVMTWLLVVYADFVVTFVMLL) traverse the membrane as a helical segment. The Lumenal segment spans residues 72–75 (PSKD). Residues 76-96 (FWYSVVNGVLFNCLAVLALSS) traverse the membrane as a helical segment. Residues 97–173 (HLRTMLTDPG…NNCVGEKNQR (77 aa)) are Cytoplasmic-facing. A DHHC domain is found at 130–180 (YKCPKCCCIKPERAHHCSICKRCIRKMDHHCPWVNNCVGEKNQRFFVLFTM). C160 functions as the S-palmitoyl cysteine intermediate in the catalytic mechanism. Residues 174-194 (FFVLFTMYIALSSVHALILCG) form a helical membrane-spanning segment. The Lumenal segment spans residues 195-217 (LQFISCVRGQWTECSDFSPPITV). A helical membrane pass occupies residues 218–238 (ILLVFLCLEGLLFFTFTAVMF). Residues 239-308 (GTQIHSICND…TRKGGPEFSV (70 aa)) are Cytoplasmic-facing.

Belongs to the DHHC palmitoyltransferase family. As to quaternary structure, homooligomers. Heterooligomers with ZDHHC3. Post-translationally, autopalmitoylated. In terms of tissue distribution, ubiquitously expressed, with highest levels in liver, kidney and brain. Expressed in all brain regions.

It is found in the golgi apparatus membrane. It carries out the reaction L-cysteinyl-[protein] + hexadecanoyl-CoA = S-hexadecanoyl-L-cysteinyl-[protein] + CoA. The enzyme catalyses L-cysteinyl-[protein] + tetradecanoyl-CoA = S-tetradecanoyl-L-cysteinyl-[protein] + CoA. The catalysed reaction is L-cysteinyl-[protein] + octadecanoyl-CoA = S-octadecanoyl-L-cysteinyl-[protein] + CoA. In terms of biological role, golgi-localized palmitoyltransferase that catalyzes the addition of palmitate onto various protein substrates and therefore functions in several unrelated biological processes. Has no stringent fatty acid selectivity and in addition to palmitate can also transfer onto target proteins myristate from tetradecanoyl-CoA and stearate from octadecanoyl-CoA. Palmitoylates sex steroid hormone receptors, including ESR1, PGR and AR, thereby regulating their targeting to the plasma membrane and their function in rapid intracellular signaling upon binding of sex hormones. Palmitoylates GNAQ, a heterotrimeric G protein, regulating its dynamic localization at the plasma membrane and is thereby involved in GNAQ-dependent G protein-coupled receptor signaling pathways. Also functions in ligand-induced cell death by regulating the FAS signaling pathway through the palmitoylation and stabilization of the receptor at the plasma membrane. In epithelial cells, palmitoylates SCRIB and regulates its localization to the plasma membrane, regulating indirectly cell polarity and differentiation. Also palmitoylates JAM3 and promotes its expression at tight junctions and regulates its function in cell migration. Palmitoylates the glucose transporter GLUT4/SLC2A4 and controls the insulin-dependent translocation of GLUT4 to the plasma membrane. In brain, could also palmitoylate SNAP25 and DLG4/PSD95. Could also palmitoylate DNAJC5 and regulate its localization to the Golgi membrane. Could also palmitoylate NCDN. May play a role in follicle stimulation hormone (FSH) activation of testicular Sertoli cells. Activates pyroptosis by catalyzing palmitoylation of gasdermin-D (GSDMD). This is Palmitoyltransferase ZDHHC7 from Mus musculus (Mouse).